The primary structure comprises 243 residues: Venom nerve growth factor 1 (243 aa).

Residues 1-18 form the signal peptide; sequence MSMLCYTLIIAFLIGIWA. The propeptide occupies 19 to 125; sequence APKSEDNVPL…TLNRNIRAKR (107 aa). Positions 47–66 are enriched in basic and acidic residues; that stretch reads GLKTSRNTDQRHPAPKKAED. Residues 47–69 form a disordered region; it reads GLKTSRNTDQRHPAPKKAEDQEL. Cystine bridges form between cysteine 139–cysteine 204, cysteine 182–cysteine 232, and cysteine 192–cysteine 234. Asparagine 148 carries an N-linked (GlcNAc...) asparagine glycan.

This sequence belongs to the NGF-beta family. Homodimer; non-covalently linked. Expressed by the venom gland.

It localises to the secreted. Functionally, nerve growth factor is important for the development and maintenance of the sympathetic and sensory nervous systems. It stimulates division and differentiation of sympathetic and embryonic sensory neurons as well as basal forebrain cholinergic neurons in the brain. Its relevance in the snake venom is not clear. However, it has been shown to inhibit metalloproteinase-dependent proteolysis of platelet glycoprotein Ib alpha, suggesting a metalloproteinase inhibition to prevent metalloprotease autodigestion and/or protection against prey proteases. Binds a lipid between the two protein chains in the homodimer. The lipid-bound form promotes histamine relase from mouse mast cells, contrary to the lipid-free form. The protein is Venom nerve growth factor 1 of Pseudonaja textilis (Eastern brown snake).